Reading from the N-terminus, the 116-residue chain is MARVKRGNVARKRRNKILKLAKGFRSGNSKLFRTANQRVMKALTNAYRDRRRRKRDFRRLWIARINAAARLHGVSYSRLIGALKKADIQINRKMLAQLAVLDSAGFKAIVDLALKA.

Belongs to the bacterial ribosomal protein bL20 family.

Its function is as follows. Binds directly to 23S ribosomal RNA and is necessary for the in vitro assembly process of the 50S ribosomal subunit. It is not involved in the protein synthesizing functions of that subunit. In Synechococcus elongatus (strain ATCC 33912 / PCC 7942 / FACHB-805) (Anacystis nidulans R2), this protein is Large ribosomal subunit protein bL20.